Reading from the N-terminus, the 254-residue chain is 4-hydroxy-tetrahydrodipicolinate reductase (254 aa).

NAD(+)-binding positions include 8 to 13, 87 to 89, and 111 to 114; these read GASGKM, GTT, and ATNM. His-143 functions as the Proton donor/acceptor in the catalytic mechanism. Residue His-144 coordinates (S)-2,3,4,5-tetrahydrodipicolinate. The Proton donor role is filled by Lys-147. Residue 153–154 coordinates (S)-2,3,4,5-tetrahydrodipicolinate; that stretch reads GT.

Belongs to the DapB family.

The protein resides in the cytoplasm. It catalyses the reaction (S)-2,3,4,5-tetrahydrodipicolinate + NAD(+) + H2O = (2S,4S)-4-hydroxy-2,3,4,5-tetrahydrodipicolinate + NADH + H(+). The catalysed reaction is (S)-2,3,4,5-tetrahydrodipicolinate + NADP(+) + H2O = (2S,4S)-4-hydroxy-2,3,4,5-tetrahydrodipicolinate + NADPH + H(+). It functions in the pathway amino-acid biosynthesis; L-lysine biosynthesis via DAP pathway; (S)-tetrahydrodipicolinate from L-aspartate: step 4/4. In terms of biological role, catalyzes the conversion of 4-hydroxy-tetrahydrodipicolinate (HTPA) to tetrahydrodipicolinate. This Campylobacter curvus (strain 525.92) protein is 4-hydroxy-tetrahydrodipicolinate reductase.